Reading from the N-terminus, the 101-residue chain is Hg-scorpine-like-2 (101 aa).

The N-terminal stretch at 1 to 17 (MKLTILILLVITSFCSC) is a signal peptide. The region spanning 60-100 (QQLCMFNKDVAGWCEKSCQQSAHQKGYCHGTKCKCGIPLNY) is the BetaSPN-type CS-alpha/beta domain. 3 cysteine pairs are disulfide-bonded: C63–C87, C73–C92, and C77–C94.

Belongs to the long chain scorpion toxin family. Class 3 subfamily. Expressed by the venom gland.

It localises to the secreted. In terms of biological role, inhibits voltage-gated potassium channels. This chain is Hg-scorpine-like-2, found in Hoffmannihadrurus gertschi (Scorpion).